Here is a 597-residue protein sequence, read N- to C-terminus: UvrABC system protein C (597 aa).

Residues 14–91 form the GIY-YIG domain; the sequence is KKPGCYLWKD…INQYQPRFNL (78 aa).

Belongs to the UvrC family. Interacts with UvrB in an incision complex.

It localises to the cytoplasm. Functionally, the UvrABC repair system catalyzes the recognition and processing of DNA lesions. UvrC both incises the 5' and 3' sides of the lesion. The N-terminal half is responsible for the 3' incision and the C-terminal half is responsible for the 5' incision. This Mycoplasma genitalium (strain ATCC 33530 / DSM 19775 / NCTC 10195 / G37) (Mycoplasmoides genitalium) protein is UvrABC system protein C.